The chain runs to 227 residues: Transmembrane emp24 domain-containing protein 1 (227 aa).

The signal sequence occupies residues 1-23 (MMAAGAALALALWLLMPPVEVGG). Residues 24–194 (AGPPPIQDGE…LQEGNLERVN (171 aa)) are Extracellular-facing. In terms of domain architecture, GOLD spans 43–125 (KQCFYQSAPA…EKLVFFELIF (83 aa)). A coiled-coil region spans residues 145-170 (EMLDVKMEDIKESIETMRTRLERSIQ). A helical membrane pass occupies residues 195-215 (FWSAVNVAVLLLVAVLQVCTL). Residues 216–227 (KRFFQDKRPVPT) lie on the Cytoplasmic side of the membrane. A COPII vesicle coat-binding motif is present at residues 218–219 (FF). A COPI vesicle coat-binding motif is present at residues 218-227 (FFQDKRPVPT).

This sequence belongs to the EMP24/GP25L family. In terms of assembly, homodimer in endoplasmic reticulum, endoplasmic reticulum-Golgi intermediate compartment and cis-Golgi network. Interacts with IL1RL1. Interacts with RNF26; this interaction is important to modulate innate immune signaling through the cGAS-STING pathway. As to expression, widely expressed.

The protein localises to the cell membrane. Its subcellular location is the endoplasmic reticulum membrane. It is found in the golgi apparatus. The protein resides in the cis-Golgi network membrane. It localises to the endoplasmic reticulum-Golgi intermediate compartment membrane. Potential role in vesicular protein trafficking, mainly in the early secretory pathway. May act as a cargo receptor at the lumenal side for incorporation of secretory cargo molecules into transport vesicles and may be involved in vesicle coat formation at the cytoplasmic side. Plays a positive role in IL-33-mediated IL-8 and IL-6 production by interacting with interleukin-33 receptor IL1RL1. Also plays a role in the modulation of innate immune signaling through the cGAS-STING pathway by interacting with RNF26. This is Transmembrane emp24 domain-containing protein 1 (TMED1) from Homo sapiens (Human).